The following is a 157-amino-acid chain: Cyclic pyranopterin monophosphate synthase (157 aa).

Residues 74 to 76 and 112 to 113 contribute to the substrate site; these read MCH and ME. Residue aspartate 127 is part of the active site.

The protein belongs to the MoaC family. As to quaternary structure, homohexamer; trimer of dimers.

It catalyses the reaction (8S)-3',8-cyclo-7,8-dihydroguanosine 5'-triphosphate = cyclic pyranopterin phosphate + diphosphate. The protein operates within cofactor biosynthesis; molybdopterin biosynthesis. Its function is as follows. Catalyzes the conversion of (8S)-3',8-cyclo-7,8-dihydroguanosine 5'-triphosphate to cyclic pyranopterin monophosphate (cPMP). This Sulfurovum sp. (strain NBC37-1) protein is Cyclic pyranopterin monophosphate synthase.